The sequence spans 265 residues: MLLIPAIDLKDGHCVRLKQGDMDQATVFSEDPADMARHWLEQGARRLHLVDLNGAFAGKPKNEPAVKAILQAVREYAEKNGIEEIPVQLGGGIRDLDTIERYLDDGLSYIIIGTAAVKNPGFLHDACSAFPGQIIVGLDAKDGKVATDGWSKLSGHEVIDLAKKFEDYGCESIIYTDIGRDGMMGGVNIEATVKLAQSMTIPVIASGGVHNIKDVEALCAVQEEGIEGVICGRSIYEGTLDLRSAQDRADELSGVGPETEAEAGE.

Aspartate 8 (proton acceptor) is an active-site residue. Aspartate 139 serves as the catalytic Proton donor.

This sequence belongs to the HisA/HisF family.

It is found in the cytoplasm. The catalysed reaction is 1-(5-phospho-beta-D-ribosyl)-5-[(5-phospho-beta-D-ribosylamino)methylideneamino]imidazole-4-carboxamide = 5-[(5-phospho-1-deoxy-D-ribulos-1-ylimino)methylamino]-1-(5-phospho-beta-D-ribosyl)imidazole-4-carboxamide. It participates in amino-acid biosynthesis; L-histidine biosynthesis; L-histidine from 5-phospho-alpha-D-ribose 1-diphosphate: step 4/9. This Herminiimonas arsenicoxydans protein is 1-(5-phosphoribosyl)-5-[(5-phosphoribosylamino)methylideneamino] imidazole-4-carboxamide isomerase.